Consider the following 284-residue polypeptide: Expansin-A17 (284 aa).

Positions 1-21 (MASSWNNPAIFLAAALAVATA) are cleaved as a signal peptide. Positions 71-185 (GGACGYVSND…RRVPCQRTGG (115 aa)) constitute an Expansin-like EG45 domain. The region spanning 195 to 279 (YWLLLYVMNV…WWITGLCYQG (85 aa)) is the Expansin-like CBD domain.

It belongs to the expansin family. Expansin A subfamily. Expressed in roots.

It localises to the secreted. Its subcellular location is the cell wall. The protein localises to the membrane. In terms of biological role, may cause loosening and extension of plant cell walls by disrupting non-covalent bonding between cellulose microfibrils and matrix glucans. No enzymatic activity has been found. May be required for rapid internodal elongation in deepwater rice during submergence. The sequence is that of Expansin-A17 (EXPA17) from Oryza sativa subsp. japonica (Rice).